Reading from the N-terminus, the 721-residue chain is BBSome complex member BBS2 (721 aa).

Residues K325–E369 are a coiled coil.

As to quaternary structure, part of BBSome complex, that contains BBS1, BBS2, BBS4, BBS5, BBS7, BBS8/TTC8, BBS9 and BBIP10. Interacts (via C-terminus) with BBS7. Interacts (via coiled coil domain) with MKKS. Interacts with CCDC28B. Interacts with DLEC1.

The protein resides in the cell projection. It localises to the cilium membrane. It is found in the cytoplasm. The protein localises to the cytoskeleton. Its subcellular location is the microtubule organizing center. The protein resides in the centrosome. It localises to the centriolar satellite. In terms of biological role, the BBSome complex is thought to function as a coat complex required for sorting of specific membrane proteins to the primary cilia. The BBSome complex is required for ciliogenesis but is dispensable for centriolar satellite function. This ciliogenic function is mediated in part by the Rab8 GDP/GTP exchange factor, which localizes to the basal body and contacts the BBSome. Rab8(GTP) enters the primary cilium and promotes extension of the ciliary membrane. Firstly the BBSome associates with the ciliary membrane and binds to RAB3IP/Rabin8, the guanosyl exchange factor (GEF) for Rab8 and then the Rab8-GTP localizes to the cilium and promotes docking and fusion of carrier vesicles to the base of the ciliary membrane. The BBSome complex, together with the LTZL1, controls SMO ciliary trafficking and contributes to the sonic hedgehog (SHH) pathway regulation. Required for proper BBSome complex assembly and its ciliary localization. In Mus musculus (Mouse), this protein is BBSome complex member BBS2 (Bbs2).